Reading from the N-terminus, the 929-residue chain is Alanine--tRNA ligase (929 aa).

Zn(2+) contacts are provided by His619, His623, Cys722, and His726.

Belongs to the class-II aminoacyl-tRNA synthetase family. Zn(2+) is required as a cofactor.

It localises to the cytoplasm. The enzyme catalyses tRNA(Ala) + L-alanine + ATP = L-alanyl-tRNA(Ala) + AMP + diphosphate. Catalyzes the attachment of alanine to tRNA(Ala) in a two-step reaction: alanine is first activated by ATP to form Ala-AMP and then transferred to the acceptor end of tRNA(Ala). Also edits incorrectly charged Ser-tRNA(Ala) and Gly-tRNA(Ala) via its editing domain. The protein is Alanine--tRNA ligase of Halobacterium salinarum (strain ATCC 29341 / DSM 671 / R1).